Here is a 373-residue protein sequence, read N- to C-terminus: Queuine tRNA-ribosyltransferase (373 aa).

Residue aspartate 93 is the Proton acceptor of the active site. Substrate contacts are provided by residues 93–97 (DSGGF), aspartate 147, glutamine 191, and glycine 218. The RNA binding stretch occupies residues 249–255 (GVGAPRD). The Nucleophile role is filled by aspartate 268. Residues 273-277 (TRNAR) are RNA binding; important for wobble base 34 recognition. 4 residues coordinate Zn(2+): cysteine 306, cysteine 308, cysteine 311, and histidine 337.

This sequence belongs to the queuine tRNA-ribosyltransferase family. In terms of assembly, homodimer. Within each dimer, one monomer is responsible for RNA recognition and catalysis, while the other monomer binds to the replacement base PreQ1. Requires Zn(2+) as cofactor.

The catalysed reaction is 7-aminomethyl-7-carbaguanine + guanosine(34) in tRNA = 7-aminomethyl-7-carbaguanosine(34) in tRNA + guanine. The protein operates within tRNA modification; tRNA-queuosine biosynthesis. Functionally, catalyzes the base-exchange of a guanine (G) residue with the queuine precursor 7-aminomethyl-7-deazaguanine (PreQ1) at position 34 (anticodon wobble position) in tRNAs with GU(N) anticodons (tRNA-Asp, -Asn, -His and -Tyr). Catalysis occurs through a double-displacement mechanism. The nucleophile active site attacks the C1' of nucleotide 34 to detach the guanine base from the RNA, forming a covalent enzyme-RNA intermediate. The proton acceptor active site deprotonates the incoming PreQ1, allowing a nucleophilic attack on the C1' of the ribose to form the product. After dissociation, two additional enzymatic reactions on the tRNA convert PreQ1 to queuine (Q), resulting in the hypermodified nucleoside queuosine (7-(((4,5-cis-dihydroxy-2-cyclopenten-1-yl)amino)methyl)-7-deazaguanosine). This Solidesulfovibrio magneticus (strain ATCC 700980 / DSM 13731 / RS-1) (Desulfovibrio magneticus) protein is Queuine tRNA-ribosyltransferase.